The chain runs to 325 residues: Delta(1)-pyrroline-2-carboxylate reductase (325 aa).

This sequence belongs to the ornithine cyclodeaminase/mu-crystallin family.

The catalysed reaction is L-proline + NAD(+) = 1-pyrroline-2-carboxylate + NADH + H(+). The enzyme catalyses L-proline + NADP(+) = 1-pyrroline-2-carboxylate + NADPH + H(+). Catalyzes the reduction of Delta(1)-pyrroline-2-carboxylate (Pyr2C) to L-proline, using preferentially NADPH over NADH as the electron donor. May be involved in a degradation pathway that converts trans-3-hydroxy-L-proline (t3LHyp) to L-proline. In Bacillus cereus (strain ZK / E33L), this protein is Delta(1)-pyrroline-2-carboxylate reductase.